We begin with the raw amino-acid sequence, 177 residues long: Large ribosomal subunit protein uL6 (177 aa).

This sequence belongs to the universal ribosomal protein uL6 family. Part of the 50S ribosomal subunit.

Functionally, this protein binds to the 23S rRNA, and is important in its secondary structure. It is located near the subunit interface in the base of the L7/L12 stalk, and near the tRNA binding site of the peptidyltransferase center. The polypeptide is Large ribosomal subunit protein uL6 (Methylobacterium sp. (strain 4-46)).